The chain runs to 128 residues: Small ribosomal subunit protein uS9 (128 aa).

Over residues 97 to 113 (RSEGFMTRDPRSVERKK) the composition is skewed to basic and acidic residues. Positions 97–128 (RSEGFMTRDPRSVERKKPGQPKARRRFQFSKR) are disordered. Over residues 114–128 (PGQPKARRRFQFSKR) the composition is skewed to basic residues.

The protein belongs to the universal ribosomal protein uS9 family.

The protein is Small ribosomal subunit protein uS9 of Bacteroides fragilis (strain ATCC 25285 / DSM 2151 / CCUG 4856 / JCM 11019 / LMG 10263 / NCTC 9343 / Onslow / VPI 2553 / EN-2).